Reading from the N-terminus, the 217-residue chain is Protein-L-isoaspartate O-methyltransferase (217 aa).

The active site involves Ser-64.

It belongs to the methyltransferase superfamily. L-isoaspartyl/D-aspartyl protein methyltransferase family.

It is found in the cytoplasm. The catalysed reaction is [protein]-L-isoaspartate + S-adenosyl-L-methionine = [protein]-L-isoaspartate alpha-methyl ester + S-adenosyl-L-homocysteine. In terms of biological role, catalyzes the methyl esterification of L-isoaspartyl residues in peptides and proteins that result from spontaneous decomposition of normal L-aspartyl and L-asparaginyl residues. It plays a role in the repair and/or degradation of damaged proteins. This Nitrobacter winogradskyi (strain ATCC 25391 / DSM 10237 / CIP 104748 / NCIMB 11846 / Nb-255) protein is Protein-L-isoaspartate O-methyltransferase.